A 1730-amino-acid chain; its full sequence is Myosin-7 (1730 aa).

Residues 8 to 56 (TVGSHVWVEDPDDAWIDGEVEEVNSEEITVNCSGKTVVAKLNNVYPKDP) form the Myosin N-terminal SH3-like domain. The Myosin motor domain maps to 61 to 731 (LGVDDMTKLA…QMAEMDAHRA (671 aa)). ATP is bound by residues 155-162 (GESGAGKT) and 208-216 (NNNSSRFGK). 4 actin-binding regions span residues 494–528 (LIEKKPGGIIALLDEACMFPRSTHDTFAQKLYQTF), 530–553 (NHKRFGKPKLAQTDFTICHYAGDV), 588–612 (FPPLPEESSKTSKFSSIGSQFKQQL), and 612–634 (LQSLLESLSTTEPHYIRCVKPNN). IQ domains are found at residues 757–786 (LQAASTEIQALCRGQVARVWFETMRREAAS), 782–811 (REAASLRIQKQARTYICQNAYKTLCSSACS), 831–850 (RRATIIIQSQIRRCLCHQRY), and 853–882 (TKKAAITTQCGWRVKVARRELRNLKMAAKE). Positions 883-1224 (TGALQDAKTK…VSDMETAEQI (342 aa)) form a coiled coil. In terms of domain architecture, Dilute spans 1327-1678 (DRIVPVFGSA…ISNLKLLLTN (352 aa)). 2 disordered regions span residues 1367–1387 (QSSTGSSPTKPPQPTSFFGRM) and 1456–1520 (DSSV…SSEE). Positions 1456–1465 (DSSVVNSPSK) are enriched in low complexity. Residues 1475-1508 (SSEENSPKKSSEENSPKESSGDKSPQKLSDDNSP) show a composition bias toward basic and acidic residues.

The protein belongs to the TRAFAC class myosin-kinesin ATPase superfamily. Myosin family. Plant myosin class XI subfamily. Homodimer.

In terms of biological role, myosin heavy chain that is required for the cell cycle-regulated transport of various organelles and proteins for their segregation. Functions by binding with its tail domain to receptor proteins on organelles and exerting force with its N-terminal motor domain against actin filaments, thereby transporting its cargo along polarized actin cables. The polypeptide is Myosin-7 (XI-A) (Arabidopsis thaliana (Mouse-ear cress)).